Consider the following 118-residue polypeptide: Small nuclear ribonucleoprotein Sm D2 (118 aa).

Residues 1 to 31 (MSLLNKPKSEMTPEELQKREEEEFNTGPLSV) are disordered. Serine 2 bears the N-acetylserine mark. Residues lysine 6 and lysine 8 each participate in a glycyl lysine isopeptide (Lys-Gly) (interchain with G-Cter in SUMO2) cross-link. A compositionally biased stretch (basic and acidic residues) spans 7–21 (PKSEMTPEELQKREE). Serine 9 bears the Phosphoserine mark. Threonine 12 carries the phosphothreonine modification. The 87-residue stretch at 29-115 (LSVLTQSVKN…VIVVLRNPLI (87 aa)) folds into the Sm domain.

The protein belongs to the snRNP core protein family. As to quaternary structure, core component of the spliceosomal U1, U2, U4 and U5 small nuclear ribonucleoproteins (snRNPs), the building blocks of the spliceosome. Most spliceosomal snRNPs contain a common set of Sm proteins, SNRPB, SNRPD1, SNRPD2, SNRPD3, SNRPE, SNRPF and SNRPG that assemble in a heptameric protein ring on the Sm site of the small nuclear RNA to form the core snRNP. Component of the U1 snRNP. The U1 snRNP is composed of the U1 snRNA and the 7 core Sm proteins SNRPB, SNRPD1, SNRPD2, SNRPD3, SNRPE, SNRPF and SNRPG, and at least three U1 snRNP-specific proteins SNRNP70/U1-70K, SNRPA/U1-A and SNRPC/U1-C. Component of the U4/U6-U5 tri-snRNP complex composed of the U4, U6 and U5 snRNAs and at least PRPF3, PRPF4, PRPF6, PRPF8, PRPF31, SNRNP200, TXNL4A, SNRNP40, SNRPB, SNRPD1, SNRPD2, SNRPD3, SNRPE, SNRPF, SNRPG, DDX23, CD2BP2, PPIH, SNU13, EFTUD2, SART1 and USP39, plus LSM2, LSM3, LSM4, LSM5, LSM6, LSM7 and LSM8. Component of the minor spliceosome, which splices U12-type introns. Part of the SMN-Sm complex that contains SMN1, GEMIN2/SIP1, DDX20/GEMIN3, GEMIN4, GEMIN5, GEMIN6, GEMIN7, GEMIN8, STRAP/UNRIP and the Sm proteins SNRPB, SNRPD1, SNRPD2, SNRPD3, SNRPE, SNRPF and SNRPG; catalyzes core snRNPs assembly. Forms a 6S pICln-Sm complex composed of CLNS1A/pICln, SNRPD1, SNRPD2, SNRPE, SNRPF and SNRPG; ring-like structure where CLNS1A/pICln mimics additional Sm proteins and which is unable to assemble into the core snRNP. Interacts with SMN1; the interaction is direct. Interacts with GEMIN2; the interaction is direct. Interacts with SNRPD1; the interaction is direct. Interacts with SNRPF; the interaction is direct.

It is found in the cytoplasm. The protein resides in the cytosol. The protein localises to the nucleus. Plays a role in pre-mRNA splicing as a core component of the spliceosomal U1, U2, U4 and U5 small nuclear ribonucleoproteins (snRNPs), the building blocks of the spliceosome. Component of both the pre-catalytic spliceosome B complex and activated spliceosome C complexes. As a component of the minor spliceosome, involved in the splicing of U12-type introns in pre-mRNAs. This Homo sapiens (Human) protein is Small nuclear ribonucleoprotein Sm D2 (SNRPD2).